We begin with the raw amino-acid sequence, 370 residues long: tRNA-specific 2-thiouridylase MnmA (370 aa).

Residues 25 to 32 (ALSGGVDS) and Leu51 contribute to the ATP site. Catalysis depends on Cys112, which acts as the Nucleophile. Cys112 and Cys211 are oxidised to a cystine. Gly137 lines the ATP pocket. Residues 161–163 (KDQ) form an interaction with tRNA region. The active-site Cysteine persulfide intermediate is the Cys211. The tract at residues 316–317 (RY) is interaction with tRNA.

This sequence belongs to the MnmA/TRMU family.

The protein resides in the cytoplasm. The enzyme catalyses S-sulfanyl-L-cysteinyl-[protein] + uridine(34) in tRNA + AH2 + ATP = 2-thiouridine(34) in tRNA + L-cysteinyl-[protein] + A + AMP + diphosphate + H(+). Its function is as follows. Catalyzes the 2-thiolation of uridine at the wobble position (U34) of tRNA, leading to the formation of s(2)U34. This chain is tRNA-specific 2-thiouridylase MnmA, found in Synechococcus sp. (strain JA-3-3Ab) (Cyanobacteria bacterium Yellowstone A-Prime).